The chain runs to 392 residues: Dual-specificity RNA methyltransferase RlmN (392 aa).

Residue E116 is the Proton acceptor of the active site. Residues 122 to 364 (EEGRGTLCVS…SPIRTPRGED (243 aa)) form the Radical SAM core domain. A disulfide bridge connects residues C129 and C369. Residues C136, C140, and C143 each coordinate [4Fe-4S] cluster. S-adenosyl-L-methionine contacts are provided by residues 195 to 196 (GE), S227, 249 to 251 (SFH), and N326. C369 (S-methylcysteine intermediate) is an active-site residue.

This sequence belongs to the radical SAM superfamily. RlmN family. Requires [4Fe-4S] cluster as cofactor.

The protein localises to the cytoplasm. The enzyme catalyses adenosine(2503) in 23S rRNA + 2 reduced [2Fe-2S]-[ferredoxin] + 2 S-adenosyl-L-methionine = 2-methyladenosine(2503) in 23S rRNA + 5'-deoxyadenosine + L-methionine + 2 oxidized [2Fe-2S]-[ferredoxin] + S-adenosyl-L-homocysteine. It carries out the reaction adenosine(37) in tRNA + 2 reduced [2Fe-2S]-[ferredoxin] + 2 S-adenosyl-L-methionine = 2-methyladenosine(37) in tRNA + 5'-deoxyadenosine + L-methionine + 2 oxidized [2Fe-2S]-[ferredoxin] + S-adenosyl-L-homocysteine. Its function is as follows. Specifically methylates position 2 of adenine 2503 in 23S rRNA and position 2 of adenine 37 in tRNAs. m2A2503 modification seems to play a crucial role in the proofreading step occurring at the peptidyl transferase center and thus would serve to optimize ribosomal fidelity. The polypeptide is Dual-specificity RNA methyltransferase RlmN (Cereibacter sphaeroides (strain ATCC 17025 / ATH 2.4.3) (Rhodobacter sphaeroides)).